The chain runs to 295 residues: Giardin subunit alpha-1 (295 aa).

Annexin repeat units follow at residues 2–71 (PKVT…MDLF), 73–143 (DRHE…MEKW), 153–223 (GSPE…AHFA), and 226–293 (GMHR…TLWR).

This sequence belongs to the annexin family. Giardin subunit alpha subfamily.

It localises to the cytoplasm. It is found in the cytoskeleton. Giardins are involved in parasite attachment to the intestinal mucosa and in the cytoskeletal disassembly and reassembly that marks the transition from infectious trophozoite to transmissible cyst. They may interact with other cytoskeletal proteins such as microtubules in the microribbons or crossbridges, to maintain the integrity of the ventral disk. The sequence is that of Giardin subunit alpha-1 from Giardia intestinalis (Giardia lamblia).